Consider the following 409-residue polypeptide: MPESLAERARSTLLKAQVLCREVESRIAEVKDRLSQWEKNRHTLRFLVSCLEHQLGFLEQCALRQGIGRALIETEWSQVVLVDLVNEMKLWYDKIQLRLERLDQVENILVADNKHLSHYISQEQALVLKKRLDEVPIIRPQIENIQTQYDTMCKRVRQKLINKRLTEIKTIFDSQFGDELTETAELTEVKPRDLDSIELELVDYINSLTDHFDKCQALEKGLFNDSNEYDELLKIVSADDSQLDDIMKHLLNTIDSTNHQIDKVYEILDIKTKQKTILHGKINELIANCTKYSEYLAIFKGIATSIEKFKEGCMQDIQLTKELYKFYDEFENSYNKLLQEVQRRRALSQKMLGIIKNCENELKTLHDEDQKLRTHFLSENGAFLPETIWPGEIDDLSPLYALDYHIKEI.

It belongs to the ATG17 family.

The protein localises to the cytoplasm. The protein resides in the preautophagosomal structure membrane. Autophagy-specific protein that functions in response to autophagy-inducing signals as a scaffold to recruit other ATG proteins to organize pre-autophagosomal structure (PAS) formation. Modulates the timing and magnitude of the autophagy response, such as the size of the sequestering vesicles. Plays particularly a role in pexophagy and nucleophagy. The polypeptide is Autophagy-related protein 17 (ATG17) (Candida glabrata (strain ATCC 2001 / BCRC 20586 / JCM 3761 / NBRC 0622 / NRRL Y-65 / CBS 138) (Yeast)).